The chain runs to 211 residues: Phosphoserine phosphatase 1 (211 aa).

The Tele-phosphohistidine intermediate role is filled by H9. H150 is an active-site residue.

It belongs to the histidine phosphatase superfamily. Metal-independent phosphoserine phosphatase family. Homodimer. Can also form a heterodimer with PspB.

The catalysed reaction is O-phospho-L-serine + H2O = L-serine + phosphate. It carries out the reaction O-phospho-D-serine + H2O = D-serine + phosphate. The protein operates within amino-acid biosynthesis; L-serine biosynthesis; L-serine from 3-phospho-D-glycerate: step 3/3. With respect to regulation, activity is not inhibited by EDTA in vitro, nor enhanced by the addition of Mg(2+). Its function is as follows. Catalyzes the dephosphorylation of L-phosphoserine to serine and inorganic phosphate. Is poorly or not active toward D-phosphoserine, DL-phosphothreonine, 3-phosphoglycerate, para-nitrophenylphosphate, and fructose-6-phosphate. Does not display phosphoglycerate mutase activity. This is Phosphoserine phosphatase 1 (pspA) from Hydrogenobacter thermophilus (strain DSM 6534 / IAM 12695 / TK-6).